We begin with the raw amino-acid sequence, 251 residues long: Adenosine 5'-phosphosulfate reductase (251 aa).

[4Fe-4S] cluster is bound by residues Cys121, Cys122, Cys204, and Cys207. Cys232 functions as the Nucleophile; cysteine thiosulfonate intermediate in the catalytic mechanism.

Belongs to the PAPS reductase family. CysH subfamily. [4Fe-4S] cluster is required as a cofactor.

It is found in the cytoplasm. It carries out the reaction [thioredoxin]-disulfide + sulfite + AMP + 2 H(+) = adenosine 5'-phosphosulfate + [thioredoxin]-dithiol. It functions in the pathway sulfur metabolism; hydrogen sulfide biosynthesis; sulfite from sulfate. Functionally, catalyzes the formation of sulfite from adenosine 5'-phosphosulfate (APS) using thioredoxin as an electron donor. This chain is Adenosine 5'-phosphosulfate reductase, found in Sinorhizobium fredii (strain USDA 257).